Consider the following 508-residue polypeptide: MTANEFILALDQGTTSSRAIVFDRAGTVRGMGQREFRQHYPRPGWVEHDAGEIWQSQLEVAREALRNAGASAADLAALGITNQRETTLIWERATGRPLARAIVWQDRRTAAMCEKLLHDGHGRMLQERTGLVVDAYFSGTKLAWLLDHVPGARKMAERGELAFGTVDTWLVWQLTGGAVHSTDPSNASRTMLFDLHAQDWSDDILALLNIPRGILPRIAPSSARIGETLPEWLGGSIPIAGVAGDQQAATFGQACFTPGMAKNTYGTGCFMLMNVGDAPVASRHNLLSTVGWSLPAGNATHATYMVEGGVFMAGAAVQWLRDGLGIIQRSADIEALAASVADTDDVFMVPAFAGLGAPHWDPYARGTLVGMTRGTTRAHIARATLESIALQSAELLSCMNADSGIPLSELRVDGGAARNDLLMQMQADLLGVPVVRPRVPESTALGAAGLAGLAVGFWSSLDEFGAQWQAERTFEPAWPADVREARMQRWRQAVELSKGWSRPAAGHA.

T14 provides a ligand contact to ADP. ATP is bound by residues T14, T15, and S16. Sn-glycerol 3-phosphate is bound at residue T14. R18 provides a ligand contact to ADP. Sn-glycerol 3-phosphate contacts are provided by R84, E85, Y136, and D245. R84, E85, Y136, D245, and Q246 together coordinate glycerol. 2 residues coordinate ADP: T267 and G314. Residues T267, G314, Q318, and G415 each contribute to the ATP site. 2 residues coordinate ADP: G415 and N419.

This sequence belongs to the FGGY kinase family.

It carries out the reaction glycerol + ATP = sn-glycerol 3-phosphate + ADP + H(+). The protein operates within polyol metabolism; glycerol degradation via glycerol kinase pathway; sn-glycerol 3-phosphate from glycerol: step 1/1. Inhibited by fructose 1,6-bisphosphate (FBP). Its function is as follows. Key enzyme in the regulation of glycerol uptake and metabolism. Catalyzes the phosphorylation of glycerol to yield sn-glycerol 3-phosphate. The polypeptide is Glycerol kinase (Bordetella parapertussis (strain 12822 / ATCC BAA-587 / NCTC 13253)).